A 574-amino-acid polypeptide reads, in one-letter code: uncharacterized protein (574 aa).

The tract at residues 297–327 is disordered; sequence STASKSKKRRKDEVSGAQRNSSPLPQDAVSS. The span at 313–327 shows a compositional bias: polar residues; that stretch reads AQRNSSPLPQDAVSS.

This is an uncharacterized protein from Macaca fascicularis (Crab-eating macaque).